Here is a 901-residue protein sequence, read N- to C-terminus: Protein translocase subunit SecA (901 aa).

Residues Q87, 105-109 (GEGKT), and D512 contribute to the ATP site. A disordered region spans residues 855 to 891 (QQLSHQDDETAAAAALAEQTGERKVGRNDPCPCGSGK). 4 residues coordinate Zn(2+): C885, C887, C896, and H897.

Belongs to the SecA family. Monomer and homodimer. Part of the essential Sec protein translocation apparatus which comprises SecA, SecYEG and auxiliary proteins SecDF-YajC and YidC. Zn(2+) is required as a cofactor.

The protein localises to the cell inner membrane. The protein resides in the cytoplasm. The enzyme catalyses ATP + H2O + cellular proteinSide 1 = ADP + phosphate + cellular proteinSide 2.. In terms of biological role, part of the Sec protein translocase complex. Interacts with the SecYEG preprotein conducting channel. Has a central role in coupling the hydrolysis of ATP to the transfer of proteins into and across the cell membrane, serving both as a receptor for the preprotein-SecB complex and as an ATP-driven molecular motor driving the stepwise translocation of polypeptide chains across the membrane. This Cronobacter sakazakii (strain ATCC BAA-894) (Enterobacter sakazakii) protein is Protein translocase subunit SecA.